Here is a 1024-residue protein sequence, read N- to C-terminus: Beta-galactosidase (1024 aa).

Residues Asn-103 and Asp-202 each coordinate substrate. Asp-202 contacts Na(+). Mg(2+)-binding residues include Glu-417, His-419, and Glu-462. Residues Glu-462 and 538 to 541 (EYAH) contribute to the substrate site. Catalysis depends on Glu-462, which acts as the Proton donor. Glu-538 functions as the Nucleophile in the catalytic mechanism. Mg(2+) is bound at residue Asn-598. Residues Phe-602 and Asn-605 each contribute to the Na(+) site. Residues Asn-605 and Trp-1000 each coordinate substrate.

It belongs to the glycosyl hydrolase 2 family. Homotetramer. The cofactor is Mg(2+). Na(+) serves as cofactor.

It carries out the reaction Hydrolysis of terminal non-reducing beta-D-galactose residues in beta-D-galactosides.. The sequence is that of Beta-galactosidase from Escherichia coli (strain ATCC 8739 / DSM 1576 / NBRC 3972 / NCIMB 8545 / WDCM 00012 / Crooks).